The primary structure comprises 220 residues: Protein-L-isoaspartate O-methyltransferase (220 aa).

Ser64 is a catalytic residue.

It belongs to the methyltransferase superfamily. L-isoaspartyl/D-aspartyl protein methyltransferase family.

The protein localises to the cytoplasm. The catalysed reaction is [protein]-L-isoaspartate + S-adenosyl-L-methionine = [protein]-L-isoaspartate alpha-methyl ester + S-adenosyl-L-homocysteine. Catalyzes the methyl esterification of L-isoaspartyl residues in peptides and proteins that result from spontaneous decomposition of normal L-aspartyl and L-asparaginyl residues. It plays a role in the repair and/or degradation of damaged proteins. This Thermococcus onnurineus (strain NA1) protein is Protein-L-isoaspartate O-methyltransferase.